A 1168-amino-acid chain; its full sequence is Carboxylic acid reductase (1168 aa).

AMP-binding positions include His-290, Ser-385, 407 to 408 (EG), Thr-412, Asp-485, 497 to 500 (YLDR), Lys-506, and Lys-606. The region spanning 645-720 (APVLPTLCRA…ALADHIEAAR (76 aa)) is the Carrier domain. Ser-679 carries the O-(pantetheine 4'-phosphoryl)serine modification. NADP(+) contacts are provided by residues 777–780 (TGFL), Arg-804, Arg-814, 844–845 (DK), 870–872 (PAA), Ser-910, Tyr-946, and Lys-950.

Belongs to the ATP-dependent AMP-binding enzyme family. Carboxylic acid reductase subfamily. It depends on pantetheine 4'-phosphate as a cofactor.

It catalyses the reaction a carboxylate + ATP + NADPH + H(+) = an aldehyde + AMP + diphosphate + NADP(+). It carries out the reaction a medium-chain fatty acid + ATP + H(+) = a medium-chain fatty acyl-AMP + diphosphate. The catalysed reaction is a long-chain fatty acid + ATP + H(+) = a long-chain fatty acyl-AMP + diphosphate. The enzyme catalyses dodecanoate + ATP + H(+) = dodecanoyl-AMP + diphosphate. It catalyses the reaction hexadecanoate + ATP + H(+) = hexadecanoyl-AMP + diphosphate. In terms of biological role, catalyzes the ATP- and NADPH-dependent reduction of carboxylic acids to the corresponding aldehydes. In vitro, also catalyzes the activation of medium/long-chain fatty acids as acyl-adenylates (acyl-AMP). The sequence is that of Carboxylic acid reductase from Mycobacterium tuberculosis (strain ATCC 25618 / H37Rv).